Here is a 541-residue protein sequence, read N- to C-terminus: Anthranilate synthase component 1 (541 aa).

L-tryptophan-binding positions include S61 and 311–313 (PYM). 348–349 (GT) provides a ligand contact to chorismate. E381 is a Mg(2+) binding site. Chorismate contacts are provided by residues Y469, R489, 503-505 (GAG), and G505. E518 contacts Mg(2+).

This sequence belongs to the anthranilate synthase component I family. Heterotetramer consisting of two non-identical subunits: a beta subunit (TrpG) and a large alpha subunit (TrpE). It depends on Mg(2+) as a cofactor.

It catalyses the reaction chorismate + L-glutamine = anthranilate + pyruvate + L-glutamate + H(+). It participates in amino-acid biosynthesis; L-tryptophan biosynthesis; L-tryptophan from chorismate: step 1/5. With respect to regulation, feedback inhibited by tryptophan. Its function is as follows. Part of a heterotetrameric complex that catalyzes the two-step biosynthesis of anthranilate, an intermediate in the biosynthesis of L-tryptophan. In the first step, the glutamine-binding beta subunit (TrpG) of anthranilate synthase (AS) provides the glutamine amidotransferase activity which generates ammonia as a substrate that, along with chorismate, is used in the second step, catalyzed by the large alpha subunit of AS (TrpE) to produce anthranilate. In the absence of TrpG, TrpE can synthesize anthranilate directly from chorismate and high concentrations of ammonia. In Vibrio parahaemolyticus serotype O3:K6 (strain RIMD 2210633), this protein is Anthranilate synthase component 1 (trpE).